The following is a 238-amino-acid chain: Pyridoxine 5'-phosphate synthase (238 aa).

Residue N7 participates in 3-amino-2-oxopropyl phosphate binding. A 1-deoxy-D-xylulose 5-phosphate-binding site is contributed by 9 to 10 (DH). R18 is a 3-amino-2-oxopropyl phosphate binding site. H43 (proton acceptor) is an active-site residue. R45 and H50 together coordinate 1-deoxy-D-xylulose 5-phosphate. The Proton acceptor role is filled by E70. Position 100 (T100) interacts with 1-deoxy-D-xylulose 5-phosphate. H191 functions as the Proton donor in the catalytic mechanism. 3-amino-2-oxopropyl phosphate contacts are provided by residues G192 and 213–214 (GH).

It belongs to the PNP synthase family. Homooctamer; tetramer of dimers.

Its subcellular location is the cytoplasm. The catalysed reaction is 3-amino-2-oxopropyl phosphate + 1-deoxy-D-xylulose 5-phosphate = pyridoxine 5'-phosphate + phosphate + 2 H2O + H(+). The protein operates within cofactor biosynthesis; pyridoxine 5'-phosphate biosynthesis; pyridoxine 5'-phosphate from D-erythrose 4-phosphate: step 5/5. In terms of biological role, catalyzes the complicated ring closure reaction between the two acyclic compounds 1-deoxy-D-xylulose-5-phosphate (DXP) and 3-amino-2-oxopropyl phosphate (1-amino-acetone-3-phosphate or AAP) to form pyridoxine 5'-phosphate (PNP) and inorganic phosphate. This chain is Pyridoxine 5'-phosphate synthase, found in Syntrophobacter fumaroxidans (strain DSM 10017 / MPOB).